A 326-amino-acid chain; its full sequence is Acetyl-coenzyme A carboxylase carboxyl transferase subunit beta (326 aa).

Residues 29–298 (LWIKCEACGT…TLISDESLET (270 aa)) form the CoA carboxyltransferase N-terminal domain. Residues Cys-33, Cys-36, Cys-52, and Cys-55 each coordinate Zn(2+). Residues 33–55 (CEACGTLTYTKDLQANQMVCPEC) form a C4-type zinc finger. Residues 302-326 (CHLPFQAESHNLSTTDNKIQPTPQG) form a disordered region. Residues 309 to 326 (ESHNLSTTDNKIQPTPQG) show a composition bias toward polar residues.

Belongs to the AccD/PCCB family. As to quaternary structure, acetyl-CoA carboxylase is a heterohexamer composed of biotin carboxyl carrier protein (AccB), biotin carboxylase (AccC) and two subunits each of ACCase subunit alpha (AccA) and ACCase subunit beta (AccD). Zn(2+) is required as a cofactor.

Its subcellular location is the cytoplasm. The catalysed reaction is N(6)-carboxybiotinyl-L-lysyl-[protein] + acetyl-CoA = N(6)-biotinyl-L-lysyl-[protein] + malonyl-CoA. The protein operates within lipid metabolism; malonyl-CoA biosynthesis; malonyl-CoA from acetyl-CoA: step 1/1. Functionally, component of the acetyl coenzyme A carboxylase (ACC) complex. Biotin carboxylase (BC) catalyzes the carboxylation of biotin on its carrier protein (BCCP) and then the CO(2) group is transferred by the transcarboxylase to acetyl-CoA to form malonyl-CoA. The sequence is that of Acetyl-coenzyme A carboxylase carboxyl transferase subunit beta from Trichodesmium erythraeum (strain IMS101).